A 731-amino-acid polypeptide reads, in one-letter code: Polyadenylate-binding protein, cytoplasmic and nuclear (731 aa).

A compositionally biased stretch (polar residues) spans 1 to 10 (MSADVSTTPA). Residues 1-51 (MSADVSTTPAAENVNGAAEASPAPAAAAPSATTPEVTAVENSTPAPAANQP) form a disordered region. The span at 17-39 (AAEASPAPAAAAPSATTPEVTAV) shows a compositional bias: low complexity. RRM domains follow at residues 54 to 132 (ASLY…WSQR), 142 to 219 (GNVF…HHIS), 235 to 312 (TNVY…RAQK), and 338 to 472 (VNLY…LAQR). Disordered regions lie at residues 369–429 (VMRD…SDKK) and 603–665 (GGRG…NAQT). The span at 616-627 (GMRGGPGYGQGR) shows a compositional bias: gly residues. Low complexity predominate over residues 645–656 (QNAAAPAGPQEG). A PABC domain is found at 658–731 (AGGVNAQTLG…MRPLAFTMST (74 aa)).

The protein belongs to the polyadenylate-binding protein type-1 family.

Its subcellular location is the cytoplasm. It localises to the nucleus. Its function is as follows. Binds the poly(A) tail of mRNA. Appears to be an important mediator of the multiple roles of the poly(A) tail in mRNA biogenesis, stability and translation. In the nucleus, involved in both mRNA cleavage and polyadenylation. Is also required for efficient mRNA export to the cytoplasm. Acts in concert with a poly(A)-specific nuclease (PAN) to affect poly(A) tail shortening, which may occur concomitantly with either nucleocytoplasmic mRNA transport or translational initiation. In the cytoplasm, stimulates translation initiation and regulates mRNA decay through translation termination-coupled poly(A) shortening, probably mediated by PAN. This Aspergillus niger (strain ATCC MYA-4892 / CBS 513.88 / FGSC A1513) protein is Polyadenylate-binding protein, cytoplasmic and nuclear (pab1).